Consider the following 580-residue polypeptide: MIAPGPRATDHDTDVLVVGAGPVGLTLANILGLQGIRTVVVEERDTLIDYPRGVGLDDEALRTFQSIGLVERVLPHTVPNQILRFMDAKRRVLAEMAPPDARFGWPKRNGFVQPLVDAELLAGLDRFAHVQVRWGSPMTGCREDADGVNVELGADGGNVGDGGGDGHPAGLRARYVVGCDGGRSMTRRVMGVSFDGTTSSTRWLVVDIANDPLGHPNSEVGADPERPYASISIAHGIRRFEFMIHADESDEQAEDPEFLTRMLARMVPHPDRVDVIRRRVYTHHSRIAGEFRRGRLLLAGDAAHLMPVWQGQGYNSGIRDAANLGWKLAAVVSGRAGDKLLDTYDMERRKHARAMIDLSTMVGRVISPTNRRVAGARDLLVRSASIVPTLKRYVLEMRFKPMPRYEHGAVVHANPGRADSPVGTLFIQPRVDTRDQQDVLLDDVLGPWFAVLCWNNNPRKILGETAFANWKALGARFFALRPATQLRWTGHDDPDVVVVGDRRGDLKSWFDIHAESVLFLRPDRCIAGACIAQRAPDLSAALFDALTLTPRGGDPQSGTGSVLYVAQPAPESSGAVAGPA.

FAD is bound by residues 14-43 and 291-301; these read DVLV…VVEE and FRRGRLLLAGD.

This sequence belongs to the PheA/TfdB FAD monooxygenase family. It depends on FAD as a cofactor.

It catalyses the reaction 3-(3-hydroxyphenyl)propanoate + NADH + O2 + H(+) = 3-(2,3-dihydroxyphenyl)propanoate + NAD(+) + H2O. It carries out the reaction (2E)-3-(3-hydroxyphenyl)prop-2-enoate + NADH + O2 + H(+) = (2E)-3-(2,3-dihydroxyphenyl)prop-2-enoate + NAD(+) + H2O. It participates in aromatic compound metabolism; 3-phenylpropanoate degradation. Its function is as follows. Catalyzes the insertion of one atom of molecular oxygen into position 2 of the phenyl ring of 3-(3-hydroxyphenyl)propionate (3-HPP) and hydroxycinnamic acid (3HCI). This Mycobacterium avium (strain 104) protein is 3-(3-hydroxy-phenyl)propionate/3-hydroxycinnamic acid hydroxylase.